We begin with the raw amino-acid sequence, 1091 residues long: Error-prone DNA polymerase 1 (1091 aa).

The segment covering 1051–1064 has biased composition (basic and acidic residues); that stretch reads RGDEFHHGMPDDHR. The tract at residues 1051–1080 is disordered; the sequence is RGDEFHHGMPDDHRAIRKRPPPSNHDDDEV.

This sequence belongs to the DNA polymerase type-C family. DnaE2 subfamily.

It is found in the cytoplasm. It carries out the reaction DNA(n) + a 2'-deoxyribonucleoside 5'-triphosphate = DNA(n+1) + diphosphate. In terms of biological role, DNA polymerase involved in damage-induced mutagenesis and translesion synthesis (TLS). It is not the major replicative DNA polymerase. This Agrobacterium fabrum (strain C58 / ATCC 33970) (Agrobacterium tumefaciens (strain C58)) protein is Error-prone DNA polymerase 1.